The chain runs to 368 residues: Histidinol-phosphate aminotransferase (368 aa).

Lysine 224 carries the post-translational modification N6-(pyridoxal phosphate)lysine.

The protein belongs to the class-II pyridoxal-phosphate-dependent aminotransferase family. Histidinol-phosphate aminotransferase subfamily. As to quaternary structure, homodimer. Pyridoxal 5'-phosphate is required as a cofactor.

It catalyses the reaction L-histidinol phosphate + 2-oxoglutarate = 3-(imidazol-4-yl)-2-oxopropyl phosphate + L-glutamate. Its pathway is amino-acid biosynthesis; L-histidine biosynthesis; L-histidine from 5-phospho-alpha-D-ribose 1-diphosphate: step 7/9. The polypeptide is Histidinol-phosphate aminotransferase (Agrobacterium fabrum (strain C58 / ATCC 33970) (Agrobacterium tumefaciens (strain C58))).